The following is an 83-amino-acid chain: Small ribosomal subunit protein eS21 (83 aa).

This sequence belongs to the eukaryotic ribosomal protein eS21 family. As to quaternary structure, component of the 40S small ribosomal subunit.

Its subcellular location is the cytoplasm. It is found in the cytosol. The protein localises to the rough endoplasmic reticulum. In Agriotes lineatus (Lined click beetle), this protein is Small ribosomal subunit protein eS21 (RpS21).